We begin with the raw amino-acid sequence, 1690 residues long: DNA-directed RNA polymerase subunit beta' (1690 aa).

The Zn(2+) site is built by Cys63, Cys65, Cys78, and Cys81. Residues Asp753, Asp755, and Asp757 each contribute to the Mg(2+) site. Positions 1107, 1295, 1302, and 1305 each coordinate Zn(2+).

Belongs to the RNA polymerase beta' chain family. In terms of assembly, the RNAP catalytic core consists of 2 alpha, 1 beta, 1 beta' and 1 omega subunit. When a sigma factor is associated with the core the holoenzyme is formed, which can initiate transcription. Mg(2+) serves as cofactor. Requires Zn(2+) as cofactor.

It catalyses the reaction RNA(n) + a ribonucleoside 5'-triphosphate = RNA(n+1) + diphosphate. DNA-dependent RNA polymerase catalyzes the transcription of DNA into RNA using the four ribonucleoside triphosphates as substrates. The chain is DNA-directed RNA polymerase subunit beta' from Thermotoga maritima (strain ATCC 43589 / DSM 3109 / JCM 10099 / NBRC 100826 / MSB8).